The following is a 469-amino-acid chain: Argininosuccinate lyase (469 aa).

The protein belongs to the lyase 1 family. Argininosuccinate lyase subfamily.

The protein localises to the cytoplasm. The enzyme catalyses 2-(N(omega)-L-arginino)succinate = fumarate + L-arginine. It functions in the pathway amino-acid biosynthesis; L-arginine biosynthesis; L-arginine from L-ornithine and carbamoyl phosphate: step 3/3. The sequence is that of Argininosuccinate lyase from Burkholderia mallei (strain NCTC 10247).